The chain runs to 111 residues: Ribonuclease P protein component (111 aa).

This sequence belongs to the RnpA family. As to quaternary structure, consists of a catalytic RNA component (M1 or rnpB) and a protein subunit.

It catalyses the reaction Endonucleolytic cleavage of RNA, removing 5'-extranucleotides from tRNA precursor.. Functionally, RNaseP catalyzes the removal of the 5'-leader sequence from pre-tRNA to produce the mature 5'-terminus. It can also cleave other RNA substrates such as 4.5S RNA. The protein component plays an auxiliary but essential role in vivo by binding to the 5'-leader sequence and broadening the substrate specificity of the ribozyme. The polypeptide is Ribonuclease P protein component (Clostridium botulinum (strain Loch Maree / Type A3)).